We begin with the raw amino-acid sequence, 260 residues long: Intermembrane phospholipid transport system permease protein MlaE (260 aa).

Topologically, residues 1 to 50 are cytoplasmic; that stretch reads MLLNALASLGHKGIKTLRTFGRAGLMLFNALVGKPEFRKHAPLLVRQLYN. Residues 51-71 form a helical membrane-spanning segment; sequence VGVLSMLIIVVSGVFIGMVLG. Residues 72-88 lie on the Periplasmic side of the membrane; it reads LQGYLVLTTYSAETSLG. Residues 89-109 traverse the membrane as a helical segment; that stretch reads MLVALSLLRELGPVVAALLFA. The Cytoplasmic segment spans residues 110-147; it reads GRAGSALTAEIGLMRATEQLSSMEMMAVDPLRRVISPR. Residues 148–168 form a helical membrane-spanning segment; the sequence is FWAGVISLPLLTVIFVAVGIW. Residues 169–198 lie on the Periplasmic side of the membrane; it reads GGSLVGVSWKGIDSGFFWSAMQNAVDWRMD. A helical transmembrane segment spans residues 199–219; sequence LVNCLIKSVVFAITVTWISLF. At 220–238 the chain is on the cytoplasmic side; it reads NGYDAIPTSAGISRATTRT. The chain crosses the membrane as a helical span at residues 239–259; that stretch reads VVHSSLAVLGLDFVLTALMFG. Position 260 (N260) is a topological domain, periplasmic.

The protein belongs to the MlaE permease family. The complex is composed of two ATP-binding proteins (MlaF), two transmembrane proteins (MlaE), two cytoplasmic solute-binding proteins (MlaB) and six periplasmic solute-binding proteins (MlaD).

The protein resides in the cell inner membrane. Its function is as follows. Part of the ABC transporter complex MlaFEDB, which is involved in a phospholipid transport pathway that maintains lipid asymmetry in the outer membrane by retrograde trafficking of phospholipids from the outer membrane to the inner membrane. Probably responsible for the translocation of the substrate across the membrane. In Escherichia coli O157:H7, this protein is Intermembrane phospholipid transport system permease protein MlaE.